A 277-amino-acid chain; its full sequence is MPELPEVATVITELKSCVLNKPVKQVKVHLDKVLKNTNVKQLNDALVNHSFVDIKRRGKYIIFCLSNGLFLVSHLRMEGKYFFEAKGSQFDLNHVLVEFLFQDGDQLNYHDTRQFGTFHLFNRYQFENARELNKLALDPLDQEFNHQAIFNKGHKSNKKIKTFILDQTNISGIGNIYADEILFASKIHPETLAKNLNLSQYQLICQNATDILKKAVEMKGTTIGTFTFKKDHTGGYQHFLKIHGKKGKQCQSCNTTIIKKKINGRGSYICEKCQIQR.

P2 (schiff-base intermediate with DNA) is an active-site residue. The Proton donor role is filled by E3. K59 acts as the Proton donor; for beta-elimination activity in catalysis. 2 residues coordinate DNA: H94 and R113. The FPG-type zinc finger occupies 241-275; it reads KIHGKKGKQCQSCNTTIIKKKINGRGSYICEKCQI. The Proton donor; for delta-elimination activity role is filled by R265.

The protein belongs to the FPG family. As to quaternary structure, monomer. Zn(2+) serves as cofactor.

The catalysed reaction is Hydrolysis of DNA containing ring-opened 7-methylguanine residues, releasing 2,6-diamino-4-hydroxy-5-(N-methyl)formamidopyrimidine.. It catalyses the reaction 2'-deoxyribonucleotide-(2'-deoxyribose 5'-phosphate)-2'-deoxyribonucleotide-DNA = a 3'-end 2'-deoxyribonucleotide-(2,3-dehydro-2,3-deoxyribose 5'-phosphate)-DNA + a 5'-end 5'-phospho-2'-deoxyribonucleoside-DNA + H(+). Functionally, involved in base excision repair of DNA damaged by oxidation or by mutagenic agents. Acts as a DNA glycosylase that recognizes and removes damaged bases. Has a preference for oxidized purines, such as 7,8-dihydro-8-oxoguanine (8-oxoG). Has AP (apurinic/apyrimidinic) lyase activity and introduces nicks in the DNA strand. Cleaves the DNA backbone by beta-delta elimination to generate a single-strand break at the site of the removed base with both 3'- and 5'-phosphates. In Mycoplasma pneumoniae (strain ATCC 29342 / M129 / Subtype 1) (Mycoplasmoides pneumoniae), this protein is Formamidopyrimidine-DNA glycosylase (mutM).